Reading from the N-terminus, the 726-residue chain is MAQTVQNVTLSLTLPITCHICLGKVRQPVICINNHVFCSICIDLWLKNNSQCPACRVPITPENPCKEIIGGTSESEPMLSHTVRKHLRKTRLELLHKEYEDEIDCLQKEVEELKSKNLSLESQIKTILDPLTLVQGNQNEDKHLVTDNPSKINPETVAEWKKKLRTANEIYEKVKDDVDKLKEANKKLKLENGGLVRENLRLKAEVDNRSPQKFGRFAVAALQSKVEQYERETSRLKKALERSDKYIEELESQVAQLKNSSEEKEAMNSICQTALPADGKGSKGSEEDVASKNQGDSARKQPSSSTSSSSHLAKPSSSRLCDTSSARQESTSKAELNCSKNKDLYQEQVEVMLDVTDTSMDTYLEREWGNKPSDCVPYKDEELYDLPAPCTPLSLSCLQLSTPENRESPVVQAGGSKKHSNHLRKLVFDDFCDSSNVSNKDSSEDDISRSENEKKSECFSSPKTAFWDCCSTSYAQNLDFESSEGNTIANSVGEISSKLSEKSGSCVSKRLNSIRSFEMNRTRTSSEASMDAAYLDKISELDSMMSESDNSKSPCNNGFKSLDLDGLSKSSQGSEFLEEPDKLEEKTELNLSKGSLTNDQLENGSEWKPTSFFLLSPSDQEMNEDFSLHSSSCPVTNEIKPPSCLFQTEFSQGILLSSSHRLFEDQRFGSSLFKMSSEMHSLHNHLQSPWSTSFVPEKRNKNVNQSTKRKIQSSLSNASPSKATKS.

An RING-type; degenerate zinc finger spans residues 18–56 (CHICLGKVRQPVICINNHVFCSICIDLWLKNNSQCPACR). Coiled-coil stretches lie at residues 87–129 (LRKT…TILD) and 155–270 (ETVA…MNSI). A Phosphoserine modification is found at Ser-210. Residues 274-335 (ALPADGKGSK…ARQESTSKAE (62 aa)) are disordered. The span at 280 to 290 (KGSKGSEEDVA) shows a compositional bias: basic and acidic residues. Residues 300-320 (KQPSSSTSSSSHLAKPSSSRL) are compositionally biased toward low complexity. A compositionally biased stretch (polar residues) spans 321–334 (CDTSSARQESTSKA). Phosphoserine is present on residues Ser-526, Ser-553, Ser-561, Ser-568, Ser-570, Ser-719, and Ser-721. Residues 687–726 (QSPWSTSFVPEKRNKNVNQSTKRKIQSSLSNASPSKATKS) form a disordered region. Residues 702–726 (NVNQSTKRKIQSSLSNASPSKATKS) show a composition bias toward polar residues.

As to quaternary structure, associates with ORC complex. Binds to chromatin; association is cell cycle-regulated, absent from mitotic chromosomes, is associated with chromatin from G1 and partially released from chromatin from mid S-phase. In terms of processing, auto-ubiquitinated.

The protein localises to the chromosome. The enzyme catalyses S-ubiquitinyl-[E2 ubiquitin-conjugating enzyme]-L-cysteine + [acceptor protein]-L-lysine = [E2 ubiquitin-conjugating enzyme]-L-cysteine + N(6)-ubiquitinyl-[acceptor protein]-L-lysine.. Its function is as follows. E3 ubiquitin ligase essential for DNA replication origin activation during S phase. Acts as a replication origin selector which selects the origins to be fired and catalyzes the multi-mono-ubiquitination of a subset of chromatin-bound ORC3 and ORC5 during S-phase. The sequence is that of ORC ubiquitin ligase 1 (OBI1) from Pongo abelii (Sumatran orangutan).